A 2240-amino-acid chain; its full sequence is Cadherin-89D (2240 aa).

5 Cadherin domains span residues 70 to 179 (SEGV…APEF), 180 to 295 (LNVP…PPKF), 296 to 411 (TEGV…VPEF), 412 to 528 (EADY…TPKF), and 529 to 643 (EHGN…APYE). Residues Asn114, Asn119, Asn191, Asn278, Asn334, Asn417, Asn585, Asn720, Asn752, Asn822, Asn833, Asn983, Asn989, Asn1006, Asn1255, Asn1318, Asn1486, Asn1529, and Asn1556 are each glycosylated (N-linked (GlcNAc...) asparagine). The segment at 814 to 844 (MPSEPTSRNITMGSRFRSRNRSRSSKSKRRL) is disordered. Cadherin domains follow at residues 824-927 (TMGS…APKF), 928-1087 (NALT…APMF), 1171-1284 (TTKC…APTF), 1285-1389 (KKSW…RPEF), and 1411-1520 (MLPV…PPKS). Residues 829–844 (FRSRNRSRSSKSKRRL) are compositionally biased toward basic residues. Cadherin domains lie at 1534–1660 (QHAY…APKF) and 1661–1774 (RGNG…MPVE). A helical membrane pass occupies residues 1884–1904 (FVTVVLLALISLGALIAACCY). The Cytoplasmic segment spans residues 1905–2240 (VCMRQKRRLW…LEFSKSNSLF (336 aa)). Disordered stretches follow at residues 1930–1972 (IAGI…PESV) and 2121–2140 (AHLELRQPNTDSSDTYEDSL). A compositionally biased stretch (basic residues) spans 1939–1952 (QKQRRQRQQRHTQR). A compositionally biased stretch (polar residues) spans 1953–1964 (CSKGSTGSQRPT).

The protein resides in the cell membrane. Cadherins are calcium-dependent cell adhesion proteins. They preferentially interact with themselves in a homophilic manner in connecting cells. The sequence is that of Cadherin-89D (Cad89D) from Drosophila melanogaster (Fruit fly).